Here is a 434-residue protein sequence, read N- to C-terminus: Alpha-enolase (434 aa).

The residue at position 2 (Ser2) is an N-acetylserine. Ser40 lines the Mg(2+) pocket. A Phosphotyrosine modification is found at Tyr44. Residue Lys60 is modified to N6-acetyllysine; alternate. Lys60 bears the N6-succinyllysine; alternate mark. Position 71 is an N6-acetyllysine (Lys71). Position 89 is an N6-acetyllysine; alternate (Lys89). Residue Lys89 is modified to N6-succinyllysine; alternate. N6-acetyllysine is present on residues Lys92 and Lys126. Positions 158 and 167 each coordinate substrate. Residues Lys193 and Lys199 each carry the N6-acetyllysine modification. Lys202 carries the N6-acetyllysine; alternate modification. A Glycyl lysine isopeptide (Lys-Gly) (interchain with G-Cter in SUMO2); alternate cross-link involves residue Lys202. Glu210 functions as the Proton donor in the catalytic mechanism. N6-acetyllysine; alternate is present on residues Lys228 and Lys233. The residue at position 228 (Lys228) is an N6-succinyllysine; alternate. N6-(2-hydroxyisobutyryl)lysine; alternate is present on Lys228. Lys233 bears the N6-malonyllysine; alternate mark. Asp245 provides a ligand contact to Mg(2+). Phosphoserine is present on Ser254. Lys256 carries the post-translational modification N6-acetyllysine. Ser263 is modified (phosphoserine). Lys281 is modified (N6-acetyllysine; alternate). Lys281 carries the N6-(2-hydroxyisobutyryl)lysine; alternate modification. Tyr287 carries the phosphotyrosine modification. Ser291 carries the phosphoserine modification. Residues Glu293 and Asp318 each coordinate Mg(2+). Glu293 and Asp318 together coordinate substrate. Residues Lys335 and Lys343 each carry the N6-acetyllysine modification. Lys343 (proton acceptor) is an active-site residue. Substrate contacts are provided by residues Ser370–Ser373 and Lys394. The segment at Ala405–Lys434 is required for interaction with PLG. At Lys406 the chain carries N6-acetyllysine. At Lys420 the chain carries N6-acetyllysine; alternate. N6-succinyllysine; alternate is present on Lys420. Lys420 carries the post-translational modification N6-malonyllysine; alternate.

The protein belongs to the enolase family. In terms of assembly, mammalian enolase is composed of 3 isozyme subunits, alpha, beta and gamma, which can form homodimers or heterodimers which are cell-type and development-specific. ENO1 interacts with PLG in the neuronal plasma membrane and promotes its activation. The C-terminal lysine is required for this binding. In vitro, interacts with several glycolytic enzymes including PKM, PGM, CKM and aldolase. Also binds troponin, in vitro. Interacts with ENO4 and PGAM2. Interacts with CMTM6. Mg(2+) serves as cofactor. Post-translationally, ISGylated. In terms of processing, lysine 2-hydroxyisobutyrylation (Khib) by p300/EP300 activates the phosphopyruvate hydratase activity. Testis. Found in the principal piece of sperm tail (at protein level). The alpha/alpha homodimer is expressed in embryo and in most adult tissues. The alpha/beta heterodimer and the beta/beta homodimer are found in striated muscle, and the alpha/gamma heterodimer and the gamma/gamma homodimer in neurons. In striated muscle, expression of ENO1 appears to be independent of fiber type.

The protein resides in the cytoplasm. It localises to the cell membrane. The enzyme catalyses (2R)-2-phosphoglycerate = phosphoenolpyruvate + H2O. It functions in the pathway carbohydrate degradation; glycolysis; pyruvate from D-glyceraldehyde 3-phosphate: step 4/5. In terms of biological role, glycolytic enzyme the catalyzes the conversion of 2-phosphoglycerate to phosphoenolpyruvate. In addition to glycolysis, involved in various processes such as growth control, hypoxia tolerance and allergic responses. May also function in the intravascular and pericellular fibrinolytic system due to its ability to serve as a receptor and activator of plasminogen on the cell surface of several cell-types such as leukocytes and neurons. Stimulates immunoglobulin production. This Mus musculus (Mouse) protein is Alpha-enolase (Eno1).